We begin with the raw amino-acid sequence, 238 residues long: CD63 antigen (238 aa).

Over 1–11 (MAVEGGMKCVK) the chain is Cytoplasmic. The chain crosses the membrane as a helical span at residues 12–32 (FLLYVLLLAFCACAVGLIAIG). Residues 33–51 (VAVQVVLKQAITHETTAGS) are Extracellular-facing. The helical transmembrane segment at 52 to 72 (LLPVVIIAVGAFLFLVAFVGC) threads the bilayer. At 73–81 (CGACKENYC) the chain is on the cytoplasmic side. Residues 82 to 102 (LMITFAIFLSLIMLVEVAVAI) form a helical membrane-spanning segment. The Extracellular portion of the chain corresponds to 103-203 (AGYVFRDQVK…TIAIWLRKNI (101 aa)). Residues Asn-116, Asn-130, Asn-150, and Asn-172 are each glycosylated (N-linked (GlcNAc...) asparagine). A helical transmembrane segment spans residues 204–224 (LLVAAAALGIAFVEVLGIIFS). Topologically, residues 225-238 (CCLVKSIRSGYEVM) are cytoplasmic. A Lysosomal targeting motif motif is present at residues 234-238 (GYEVM).

The protein belongs to the tetraspanin (TM4SF) family. Interacts with TIMP1 and ITGB1 and recruits TIMP1 to ITGB1. Interacts with CD9. Identified in a complex with CD9 and ITGB3. Interacts with PMEL. Interacts with KDR/VEGFR2; identified in a complex with ITGB1 and KDR/VEGFR2 and is required to recruit KDR to ITGB1 complexes. Interacts with SYT7. In terms of processing, palmitoylated at a low, basal level in unstimulated platelets. The level of palmitoylation increases when platelets are activated by thrombin (in vitro). In terms of tissue distribution, ubiquitous. Strongly expressed in kidney. Detected in spleen, bone marrow, peripheral blood mononuclear cells and macrophages.

Its subcellular location is the cell membrane. The protein resides in the lysosome membrane. It is found in the late endosome membrane. The protein localises to the endosome. It localises to the multivesicular body. Its subcellular location is the melanosome. The protein resides in the secreted. It is found in the extracellular exosome. The protein localises to the cell surface. Its function is as follows. Functions as a cell surface receptor for TIMP1 and plays a role in the activation of cellular signaling cascades. Plays a role in the activation of ITGB1 and integrin signaling, leading to the activation of AKT, FAK/PTK2 and MAP kinases. Promotes cell survival, reorganization of the actin cytoskeleton, cell adhesion, spreading and migration, via its role in the activation of AKT and FAK/PTK2. Plays a role in VEGFA signaling via its role in regulating the internalization of KDR/VEGFR2. Plays a role in intracellular vesicular transport processes, and is required for normal trafficking of the PMEL luminal domain that is essential for the development and maturation of melanocytes. Plays a role in the adhesion of leukocytes onto endothelial cells via its role in the regulation of SELP trafficking. May play a role in mast cell degranulation in response to Ms4a2/FceRI stimulation, but not in mast cell degranulation in response to other stimuli. The polypeptide is CD63 antigen (Cd63) (Mus musculus (Mouse)).